The sequence spans 121 residues: uncharacterized protein (121 aa).

This is an uncharacterized protein from Ictaluridae (bullhead catfishes).